A 341-amino-acid polypeptide reads, in one-letter code: Methionine import ATP-binding protein MetN 2 (341 aa).

The ABC transporter domain occupies 2-241 (IELKEVVKEY…PQHTVTKRFV (240 aa)). Residue 38–45 (GFSGAGKS) coordinates ATP.

It belongs to the ABC transporter superfamily. Methionine importer (TC 3.A.1.24) family. As to quaternary structure, the complex is composed of two ATP-binding proteins (MetN), two transmembrane proteins (MetI) and a solute-binding protein (MetQ).

It localises to the cell membrane. The enzyme catalyses L-methionine(out) + ATP + H2O = L-methionine(in) + ADP + phosphate + H(+). It catalyses the reaction D-methionine(out) + ATP + H2O = D-methionine(in) + ADP + phosphate + H(+). Part of the ABC transporter complex MetNIQ involved in methionine import. Responsible for energy coupling to the transport system. The protein is Methionine import ATP-binding protein MetN 2 of Staphylococcus aureus (strain N315).